The sequence spans 387 residues: SpoIVD-associated factor A (387 aa).

The 46-residue stretch at Lys2–Val47 folds into the LysM domain. 2 disordered regions span residues Ser49–Leu106 and Asn355–Glu387. A compositionally biased stretch (basic and acidic residues) spans Lys70–Ser96. A compositionally biased stretch (polar residues) spans Pro368–Gln377.

Its subcellular location is the spore cortex. Functionally, probably involved in the assembly of some coat protein components implicated in both lysozyme resistance and germination. Could be required for the assembly of CotG. Associates with SpoIVD during the early stage of coat assembly. The protein is SpoIVD-associated factor A (safA) of Bacillus subtilis (strain 168).